We begin with the raw amino-acid sequence, 588 residues long: 2-isopropylmalate synthase (588 aa).

Positions 40–314 (PRWCAVDLRD…DPQIDFSDLD (275 aa)) constitute a Pyruvate carboxyltransferase domain. Residues D49, H253, H255, and N289 each contribute to the Mg(2+) site. A regulatory domain region spans residues 456-588 (APLDRVEEKW…TVREPELAAV (133 aa)).

The protein belongs to the alpha-IPM synthase/homocitrate synthase family. LeuA type 2 subfamily. As to quaternary structure, homodimer. Requires Mg(2+) as cofactor.

The protein localises to the cytoplasm. The enzyme catalyses 3-methyl-2-oxobutanoate + acetyl-CoA + H2O = (2S)-2-isopropylmalate + CoA + H(+). The protein operates within amino-acid biosynthesis; L-leucine biosynthesis; L-leucine from 3-methyl-2-oxobutanoate: step 1/4. In terms of biological role, catalyzes the condensation of the acetyl group of acetyl-CoA with 3-methyl-2-oxobutanoate (2-ketoisovalerate) to form 3-carboxy-3-hydroxy-4-methylpentanoate (2-isopropylmalate). This Clavibacter sepedonicus (Clavibacter michiganensis subsp. sepedonicus) protein is 2-isopropylmalate synthase.